A 65-amino-acid polypeptide reads, in one-letter code: Kappa-scoloptoxin(04)-Ssd1a (65 aa).

Residues 1–24 (MKKTCVVSVFLVLLLLKFHDLSMG) form the signal peptide. The propeptide occupies 25–36 (EEISPLKKVAPR). 2 disulfide bridges follow: cysteine 42–cysteine 53 and cysteine 47–cysteine 60.

As to expression, expressed by the venom gland.

Its subcellular location is the secreted. Its function is as follows. Voltage-gated potassium channel inhibitor. In Scolopendra dehaani (Thai centipede), this protein is Kappa-scoloptoxin(04)-Ssd1a.